Reading from the N-terminus, the 230-residue chain is 7-cyano-7-deazaguanine synthase (230 aa).

Leucine 14–leucine 24 is an ATP binding site. Zn(2+)-binding residues include cysteine 194, cysteine 204, cysteine 207, and cysteine 210.

It belongs to the QueC family. Requires Zn(2+) as cofactor.

The catalysed reaction is 7-carboxy-7-deazaguanine + NH4(+) + ATP = 7-cyano-7-deazaguanine + ADP + phosphate + H2O + H(+). It functions in the pathway purine metabolism; 7-cyano-7-deazaguanine biosynthesis. Its function is as follows. Catalyzes the ATP-dependent conversion of 7-carboxy-7-deazaguanine (CDG) to 7-cyano-7-deazaguanine (preQ(0)). The sequence is that of 7-cyano-7-deazaguanine synthase from Vesicomyosocius okutanii subsp. Calyptogena okutanii (strain HA).